We begin with the raw amino-acid sequence, 308 residues long: D-alanine--D-alanine ligase (308 aa).

An ATP-grasp domain is found at 105 to 302 (KAIFKALGLD…FPELCERILD (198 aa)). 133 to 188 (DLPFGVPCVVKPAGEGSSVGVQIVKDAARLADACREAARYKGDVVVERYVKGTEVN) lines the ATP pocket. The Mg(2+) site is built by D256, E269, and N271.

The protein belongs to the D-alanine--D-alanine ligase family. Mg(2+) is required as a cofactor. It depends on Mn(2+) as a cofactor.

The protein resides in the cytoplasm. It carries out the reaction 2 D-alanine + ATP = D-alanyl-D-alanine + ADP + phosphate + H(+). Its pathway is cell wall biogenesis; peptidoglycan biosynthesis. Cell wall formation. The chain is D-alanine--D-alanine ligase from Anaeromyxobacter sp. (strain Fw109-5).